A 173-amino-acid chain; its full sequence is Probable capsid assembly scaffolding protein (173 aa).

The disordered stretch occupies residues 1 to 30 (MSDTATTEGTPAGDPTPVVTDKPLEPTPKT). Positions 36–56 (VKELRQEAAAARVAKKDAVEA) form a coiled coil.

This sequence belongs to the L5likevirus scaffolding protein family.

Functionally, scaffolding protein involved in the icosahedric procapsid assembly. Coassembles with the capsid proteins to form the procapsid, in which the scaffolding protein is found within the external shell of icosahedrally arranged capsid protein subunits. The chain is Probable capsid assembly scaffolding protein (16) from Mycobacterium (Mycobacteriophage D29).